Here is a 38-residue protein sequence, read N- to C-terminus: Very early lactation protein (38 aa).

As to quaternary structure, homodimer. Post-translationally, O-glycosylated. Contains sialic acid residues. As to expression, found in the whey fraction of milk (at protein level).

Its subcellular location is the secreted. This is Very early lactation protein from Trichosurus vulpecula (Brush-tailed possum).